A 501-amino-acid polypeptide reads, in one-letter code: MAMAGLYRRLLPSPPAVDFASSQGKQLFLEAVQNGTMESFYRLVSYFQTQSEPAFCGLASLSMVLNALAIDPGRKWKGPWRWFDESMLDCCEPLDKIKARGISFGKLVCLAHCAGAKVEAFHASHSSIDHFRKYVMKCSTSDDCHVISSYHREALKQTGTGHFSPIGGYHAGKDMALILDVARFKYPPHWIPLTHLWEGMNYVDESTGKTRGFMLISRPHREPGMLYTLSCKHESWNSIAKFLIDDIPFLLTSEDVKDICKVLSVIVTSLPSNFEEFIKWVAEIRRGEDGSPSLSVEEKARLSVKEEILKQVQRTGLFKHVASFLSHSCSGHTPTSGDRDTFPVIAASVCCQGAEILGGKISSSAEYCCRETCMKCWKAEDDKPIRMVCGTVVNGNTEQGVDVLIPSSCGKLSCTCSSTTKSIRKHPASTDVLTVLLLSLPTSTWAGIADEKLLSEIHDLVSIENLPALLQEEVLHLRRQLHILKRCQEGKVDEDLGVPLS.

The Peptidase C83 domain occupies 1 to 221 (MAMAGLYRRL…GFMLISRPHR (221 aa)). Catalysis depends on residues Cys56, His162, and Asp180.

It belongs to the phytochelatin synthase family. As to expression, expressed in roots, nodules and leaves.

The enzyme catalyses [Glu(-Cys)](n)-Gly + glutathione + H(+) = [Glu(-Cys)](n+1)-Gly + glycine. With respect to regulation, requires cadmium for activity. Also activated in vitro by Zn(2+), Cu(2+), Fe(2+) or Fe(3+) ions, but not by Co(2+) or Ni(2+) ions. Its function is as follows. Involved in the synthesis of phytochelatins (PC) and homophytochelatins (hPC), the heavy-metal-binding peptides of plants. The chain is Glutathione gamma-glutamylcysteinyltransferase 1 (PCS1) from Lotus japonicus (Lotus corniculatus var. japonicus).